A 393-amino-acid chain; its full sequence is Sulfite oxidase (393 aa).

Positions 1–27 are disordered; that stretch reads MPGIRGPSEYSQEPPRHPSLKVNAKEP. The moco domain stretch occupies residues 10-242; sequence YSQEPPRHPS…QGFFMQKDYK (233 aa). Residues 49 to 53, Cys-98, 159 to 161, His-202, Arg-207, and 218 to 220 contribute to the Mo-molybdopterin site; these read YKRNH, SVD, and SVK. A homodimerization region spans residues 243–393; the sequence is MFPPSVNWDN…VLLRLGHSNL (151 aa). Residues 391–393 carry the Microbody targeting signal motif; the sequence is SNL.

Predominantly monomer; also homodimer. The cofactor is Mo-molybdopterin.

The protein resides in the peroxisome. The enzyme catalyses sulfite + O2 + H2O = sulfate + H2O2. It functions in the pathway energy metabolism; sulfur metabolism. Probably involved in sulfite oxidative detoxification. This is Sulfite oxidase (SOX) from Arabidopsis thaliana (Mouse-ear cress).